The following is a 101-amino-acid chain: NADH-quinone oxidoreductase subunit K (101 aa).

3 helical membrane-spanning segments follow: residues 4–24, 30–50, and 61–81; these read LAHFLVLGAILFAISIVGIFL, IVLLMAIELMLLAVNINFVAF, and VFVFFILTVAAAESAIGLAIL.

This sequence belongs to the complex I subunit 4L family. In terms of assembly, NDH-1 is composed of 14 different subunits. Subunits NuoA, H, J, K, L, M, N constitute the membrane sector of the complex.

It localises to the cell inner membrane. The enzyme catalyses a quinone + NADH + 5 H(+)(in) = a quinol + NAD(+) + 4 H(+)(out). In terms of biological role, NDH-1 shuttles electrons from NADH, via FMN and iron-sulfur (Fe-S) centers, to quinones in the respiratory chain. The immediate electron acceptor for the enzyme in this species is believed to be ubiquinone. Couples the redox reaction to proton translocation (for every two electrons transferred, four hydrogen ions are translocated across the cytoplasmic membrane), and thus conserves the redox energy in a proton gradient. The polypeptide is NADH-quinone oxidoreductase subunit K (Cupriavidus necator (strain ATCC 17699 / DSM 428 / KCTC 22496 / NCIMB 10442 / H16 / Stanier 337) (Ralstonia eutropha)).